Consider the following 450-residue polypeptide: mRNA cleavage and polyadenylation factor CLP1 (450 aa).

ATP is bound by residues glutamate 29, lysine 67, and 137 to 142 (NSGKTS).

It belongs to the Clp1 family. Clp1 subfamily. In terms of assembly, component of a pre-mRNA cleavage factor complex. Interacts directly with PCF11.

It localises to the nucleus. Required for endonucleolytic cleavage during polyadenylation-dependent pre-mRNA 3'-end formation. The protein is mRNA cleavage and polyadenylation factor CLP1 of Yarrowia lipolytica (strain CLIB 122 / E 150) (Yeast).